Reading from the N-terminus, the 691-residue chain is MTDCSSTLAALLPTADFTASLGNSDDHVDVSSFTTTSESTSPPYSSSEHHSPTDQRTETPTSDSGNASFSPENVATSFESSDRDASPDNLSTSSAHLNDLQEKGVVVDEELQRQLLRFHQDFKESLMENNQNTINMMSAAFNQQLFKQTLANLNTVTPQLPVNIPTGLPMPASPCTTAASAPSVESTPTKRKRQRRNPVWPYFDVIDGTARCKQCLYSTKSVFSTNLKVHLRSHHRPDYEKVIMAEDALNLNALLLSGNTSKLFNVDANRKRMPPMTSSILMTINKLANQQQNGEENPLNAVLRQTIANNGLQQHLQNVQTQLQAAQAAVQKQQQQQQQQQIQQQQQQQQQGAIPQFALNAANLAALNQLARNQMQPTPPPVPQVSQDNIINTLNFPAHIKQEIMNAPHGTDANGVPQPKRRRLRRHPVWVYFKDLEDRMVGCTNCEFRTGSAFSTNLKMHLKAHHKDDYEKVLQLEEEMRLEEGCFGPGNKFKTELIDYIRGGGNVTTPPTPNSSSFPSTPKTPQLVQQIISQSFARSQSPNVIQNGEIKIKKECEDDMFSGLSSTDKLAALVGIAGQEVKKEEAMPANFEEFRQRLLANSSLSSFLGQSTAQPIAVDLNGSVIASETKSPCSSNEDDRKQERDKALARLWADNETLLTNTHFREFVHCLAPEYEIPDVDILATSLVDQY.

Disordered regions lie at residues 18–97 and 171–195; these read TASL…SAHL and PASPCTTAASAPSVESTPTKRKRQR. The span at 31–46 shows a compositional bias: low complexity; the sequence is SSFTTTSESTSPPYSS. Positions 47-57 are enriched in basic and acidic residues; that stretch reads SEHHSPTDQRT. Residues 58–79 show a composition bias toward polar residues; it reads ETPTSDSGNASFSPENVATSFE. Residues 171–183 show a composition bias toward low complexity; the sequence is PASPCTTAASAPS. 2 BED-type zinc fingers span residues 194-242 and 424-473; these read QRRN…YEKV and LRRH…YEKV. Residues C212, C215, H230, H235, C443, C446, H461, and H466 each coordinate Zn(2+).

In terms of assembly, interacts with gex-3.

The polypeptide is Gex-3-interacting protein 13 (gei-13) (Caenorhabditis elegans).